The following is a 987-amino-acid chain: Ephrin type-B receptor 2 (987 aa).

Residues 1 to 19 (MGPLWFCCLPLALLPLLAA) form the signal peptide. Topologically, residues 20 to 544 (VEETLMDSTT…QTSVQEKLPL (525 aa)) are extracellular. Residues 21–203 (EETLMDSTTA…FYRKCPRVIQ (183 aa)) form the Eph LBD domain. Intrachain disulfides connect Cys63/Cys185 and Cys98/Cys108. N-linked (GlcNAc...) asparagine glycans are attached at residues Asn266, Asn337, Asn429, Asn478, and Asn483. Fibronectin type-III domains lie at 325-435 (IPSA…TNQA) and 436-531 (APSA…TMTE). Residues 545 to 565 (IIGSSAAGLVFLIAVVVIIIV) traverse the membrane as a helical segment. At 566 to 987 (CNRRGFERAD…QMNQIQSVEV (422 aa)) the chain is on the cytoplasmic side. Residues 622–885 (VKIEQVIGAG…QIVNTLDKMI (264 aa)) form the Protein kinase domain. ATP contacts are provided by residues 628–636 (IGAGEFGEV) and Lys654. Asp747 (proton acceptor) is an active-site residue. Lys892 is covalently cross-linked (Glycyl lysine isopeptide (Lys-Gly) (interchain with G-Cter in ubiquitin)). The SAM domain occupies 914 to 978 (TSFNTVDEWL…LNSIQVMRAQ (65 aa)). Positions 985–987 (VEV) match the PDZ-binding motif.

Belongs to the protein kinase superfamily. Tyr protein kinase family. Ephrin receptor subfamily. Heterotetramer upon binding of the ligand. The heterotetramer is composed of an ephrin dimer and a receptor dimer. Oligomerization is probably required to induce biological responses. Ligand binding induces cleavage by matrix metalloproteinases (MMPs) such as MMP7/MMP9, producing an EphB2/N-terminal fragment (NTF) and a C-terminal long fragment (EphB2-LF). EphB2-LF is further cleaved by MMPs, producing EphB2/CTF1 which is further cleaved by the PS1/gamma-secretase producing EphB2/CTF2. In terms of processing, polyubiquitinated; ligand binding stimulates ubiquitination. Ubiquitinated by RNF186 at Lys-892, mainly through 'Lys-27'-linked polyubiquitin chains.

Its subcellular location is the cell membrane. It is found in the cell projection. It localises to the axon. The protein localises to the dendrite. It catalyses the reaction L-tyrosyl-[protein] + ATP = O-phospho-L-tyrosyl-[protein] + ADP + H(+). Functionally, receptor tyrosine kinase which binds promiscuously transmembrane ephrin-B family ligands residing on adjacent cells, leading to contact-dependent bidirectional signaling into neighboring cells. The signaling pathway downstream of the receptor is referred to as forward signaling while the signaling pathway downstream of the ephrin ligand is referred to as reverse signaling. Functions in axon guidance during development. In addition to axon guidance, also regulates dendritic spines development and maturation and stimulates the formation of excitatory synapses. The polypeptide is Ephrin type-B receptor 2 (EPHB2) (Coturnix japonica (Japanese quail)).